We begin with the raw amino-acid sequence, 343 residues long: Dihydroorotase (343 aa).

Residues H13 and H15 each coordinate Zn(2+). Residues 15-17 (HLR) and N41 contribute to the substrate site. K99, H136, and H174 together coordinate Zn(2+). K99 is modified (N6-carboxylysine). H136 contributes to the substrate binding site. L219 is a substrate binding site. D247 provides a ligand contact to Zn(2+). D247 is a catalytic residue. H251 and A263 together coordinate substrate.

It belongs to the metallo-dependent hydrolases superfamily. DHOase family. Class II DHOase subfamily. In terms of assembly, homodimer. Requires Zn(2+) as cofactor.

The enzyme catalyses (S)-dihydroorotate + H2O = N-carbamoyl-L-aspartate + H(+). Its pathway is pyrimidine metabolism; UMP biosynthesis via de novo pathway; (S)-dihydroorotate from bicarbonate: step 3/3. In terms of biological role, catalyzes the reversible cyclization of carbamoyl aspartate to dihydroorotate. The chain is Dihydroorotase from Shewanella putrefaciens (strain CN-32 / ATCC BAA-453).